The following is a 251-amino-acid chain: Ubiquinone/menaquinone biosynthesis C-methyltransferase UbiE (251 aa).

S-adenosyl-L-methionine is bound by residues T74, D95, and 123-124; that span reads NA.

Belongs to the class I-like SAM-binding methyltransferase superfamily. MenG/UbiE family.

The enzyme catalyses a 2-demethylmenaquinol + S-adenosyl-L-methionine = a menaquinol + S-adenosyl-L-homocysteine + H(+). It catalyses the reaction a 2-methoxy-6-(all-trans-polyprenyl)benzene-1,4-diol + S-adenosyl-L-methionine = a 5-methoxy-2-methyl-3-(all-trans-polyprenyl)benzene-1,4-diol + S-adenosyl-L-homocysteine + H(+). Its pathway is quinol/quinone metabolism; menaquinone biosynthesis; menaquinol from 1,4-dihydroxy-2-naphthoate: step 2/2. It participates in cofactor biosynthesis; ubiquinone biosynthesis. Its function is as follows. Methyltransferase required for the conversion of demethylmenaquinol (DMKH2) to menaquinol (MKH2) and the conversion of 2-polyprenyl-6-methoxy-1,4-benzoquinol (DDMQH2) to 2-polyprenyl-3-methyl-6-methoxy-1,4-benzoquinol (DMQH2). In Edwardsiella ictaluri (strain 93-146), this protein is Ubiquinone/menaquinone biosynthesis C-methyltransferase UbiE.